The following is a 601-amino-acid chain: Glutathione-regulated potassium-efflux system protein KefB (601 aa).

Helical transmembrane passes span 4–24 (ADLLTAGVLFLFAAVAAVPLA), 29–49 (IGAVLGYLLAGIAIGPWGLGF), 55–75 (EILHFSELGVVFLMFIIGLEL), 87–107 (IFGVGAAQVLLSAAVLAGLLM), 111–131 (FLWQAAVVGGIGLAMSSTAMA), 152–172 (VLLFQDLAVIPALALVPLLAG), 177–197 (HFDWFKVAMKVLAFAVMLIGG), 207–227 (FIAASGVREVFTAATLLLVLS), 230–250 (LFMDALGLSMALGTFIAGVLL), 262–282 (AIDPFKGLLLGLFFISVGMSL), 284–304 (LGVLYTHLLWVAASVVILVVI), 324–344 (MQFASVLSQGGEFAFVLFSTA), and 356–376 (ALLLVTVTLSMMTTPLLMKGI). The region spanning 400-519 (KPQVIVVGFG…AGVTQFSRET (120 aa)) is the RCK N-terminal domain.

This sequence belongs to the monovalent cation:proton antiporter 2 (CPA2) transporter (TC 2.A.37) family. KefB subfamily. Interacts with the regulatory subunit KefG.

Its subcellular location is the cell inner membrane. In terms of biological role, pore-forming subunit of a potassium efflux system that confers protection against electrophiles. Catalyzes K(+)/H(+) antiport. This Salmonella newport (strain SL254) protein is Glutathione-regulated potassium-efflux system protein KefB.